A 181-amino-acid polypeptide reads, in one-letter code: Crossover junction endodeoxyribonuclease RuvC (181 aa).

Catalysis depends on residues D7, E67, and D139. The Mg(2+) site is built by D7, E67, and D139.

The protein belongs to the RuvC family. In terms of assembly, homodimer which binds Holliday junction (HJ) DNA. The HJ becomes 2-fold symmetrical on binding to RuvC with unstacked arms; it has a different conformation from HJ DNA in complex with RuvA. In the full resolvosome a probable DNA-RuvA(4)-RuvB(12)-RuvC(2) complex forms which resolves the HJ. Mg(2+) is required as a cofactor.

It is found in the cytoplasm. It catalyses the reaction Endonucleolytic cleavage at a junction such as a reciprocal single-stranded crossover between two homologous DNA duplexes (Holliday junction).. Its function is as follows. The RuvA-RuvB-RuvC complex processes Holliday junction (HJ) DNA during genetic recombination and DNA repair. Endonuclease that resolves HJ intermediates. Cleaves cruciform DNA by making single-stranded nicks across the HJ at symmetrical positions within the homologous arms, yielding a 5'-phosphate and a 3'-hydroxyl group; requires a central core of homology in the junction. The consensus cleavage sequence is 5'-(A/T)TT(C/G)-3'. Cleavage occurs on the 3'-side of the TT dinucleotide at the point of strand exchange. HJ branch migration catalyzed by RuvA-RuvB allows RuvC to scan DNA until it finds its consensus sequence, where it cleaves and resolves the cruciform DNA. The protein is Crossover junction endodeoxyribonuclease RuvC of Cupriavidus necator (strain ATCC 17699 / DSM 428 / KCTC 22496 / NCIMB 10442 / H16 / Stanier 337) (Ralstonia eutropha).